We begin with the raw amino-acid sequence, 135 residues long: FK506-binding protein 2 (135 aa).

An N-terminal signal peptide occupies residues methionine 1 to alanine 20. Residues glycine 40–glutamate 128 form the PPIase FKBP-type domain. Positions lysine 132–leucine 135 match the Prevents secretion from ER motif.

Belongs to the FKBP-type PPIase family. FKBP2 subfamily.

It is found in the endoplasmic reticulum. The enzyme catalyses [protein]-peptidylproline (omega=180) = [protein]-peptidylproline (omega=0). With respect to regulation, inhibited by both FK506 and rapamycin. PPIases accelerate the folding of proteins. It catalyzes the cis-trans isomerization of proline imidic peptide bonds in oligopeptides. The chain is FK506-binding protein 2 (fkbB) from Emericella nidulans (strain FGSC A4 / ATCC 38163 / CBS 112.46 / NRRL 194 / M139) (Aspergillus nidulans).